The sequence spans 142 residues: Peptide methionine sulfoxide reductase MsrB (142 aa).

One can recognise a MsrB domain in the interval 10-132 (EEEWKKVLTP…NSVSLNFKTE (123 aa)). Zn(2+) contacts are provided by Cys49, Cys52, Cys98, and Cys101. The active-site Nucleophile is the Cys121.

Belongs to the MsrB Met sulfoxide reductase family. Zn(2+) is required as a cofactor.

The enzyme catalyses L-methionyl-[protein] + [thioredoxin]-disulfide + H2O = L-methionyl-(R)-S-oxide-[protein] + [thioredoxin]-dithiol. The protein is Peptide methionine sulfoxide reductase MsrB of Methanosarcina barkeri (strain Fusaro / DSM 804).